We begin with the raw amino-acid sequence, 176 residues long: NAD(P)H-quinone oxidoreductase subunit 6, chloroplastic (176 aa).

5 helical membrane passes run 10–30 (FLLV…VLLT), 32–52 (PIYS…FYIP), 61–81 (AQLL…VMFM), 93–115 (WTVG…ITTI), and 152–172 (FFLP…GAIA).

Belongs to the complex I subunit 6 family. NDH is composed of at least 16 different subunits, 5 of which are encoded in the nucleus.

It localises to the plastid. It is found in the chloroplast thylakoid membrane. The catalysed reaction is a plastoquinone + NADH + (n+1) H(+)(in) = a plastoquinol + NAD(+) + n H(+)(out). The enzyme catalyses a plastoquinone + NADPH + (n+1) H(+)(in) = a plastoquinol + NADP(+) + n H(+)(out). In terms of biological role, NDH shuttles electrons from NAD(P)H:plastoquinone, via FMN and iron-sulfur (Fe-S) centers, to quinones in the photosynthetic chain and possibly in a chloroplast respiratory chain. The immediate electron acceptor for the enzyme in this species is believed to be plastoquinone. Couples the redox reaction to proton translocation, and thus conserves the redox energy in a proton gradient. This chain is NAD(P)H-quinone oxidoreductase subunit 6, chloroplastic (ndhG), found in Vitis vinifera (Grape).